A 197-amino-acid polypeptide reads, in one-letter code: Nucleoside triphosphate pyrophosphatase (197 aa).

Catalysis depends on D74, which acts as the Proton acceptor.

This sequence belongs to the Maf family. Requires a divalent metal cation as cofactor.

The protein localises to the cytoplasm. The enzyme catalyses a ribonucleoside 5'-triphosphate + H2O = a ribonucleoside 5'-phosphate + diphosphate + H(+). It catalyses the reaction a 2'-deoxyribonucleoside 5'-triphosphate + H2O = a 2'-deoxyribonucleoside 5'-phosphate + diphosphate + H(+). Its function is as follows. Nucleoside triphosphate pyrophosphatase. May have a dual role in cell division arrest and in preventing the incorporation of modified nucleotides into cellular nucleic acids. The sequence is that of Nucleoside triphosphate pyrophosphatase from Granulibacter bethesdensis (strain ATCC BAA-1260 / CGDNIH1).